The primary structure comprises 220 residues: UPF0319 protein YccT (220 aa).

The signal sequence occupies residues 1 to 20 (MKTGALATFLALCLPATVFA).

This sequence belongs to the UPF0319 family.

The sequence is that of UPF0319 protein YccT from Salmonella heidelberg (strain SL476).